Reading from the N-terminus, the 191-residue chain is Protein GrpE (191 aa).

The protein belongs to the GrpE family. As to quaternary structure, homodimer.

The protein resides in the cytoplasm. In terms of biological role, participates actively in the response to hyperosmotic and heat shock by preventing the aggregation of stress-denatured proteins, in association with DnaK and GrpE. It is the nucleotide exchange factor for DnaK and may function as a thermosensor. Unfolded proteins bind initially to DnaJ; upon interaction with the DnaJ-bound protein, DnaK hydrolyzes its bound ATP, resulting in the formation of a stable complex. GrpE releases ADP from DnaK; ATP binding to DnaK triggers the release of the substrate protein, thus completing the reaction cycle. Several rounds of ATP-dependent interactions between DnaJ, DnaK and GrpE are required for fully efficient folding. In Nitratidesulfovibrio vulgaris (strain ATCC 29579 / DSM 644 / CCUG 34227 / NCIMB 8303 / VKM B-1760 / Hildenborough) (Desulfovibrio vulgaris), this protein is Protein GrpE.